A 342-amino-acid polypeptide reads, in one-letter code: DNA repair protein RAD51 homolog 1 (342 aa).

A disordered region spans residues 1-24 (MTTMEQRRNQNAVQQQDDEETQHG). The region spanning 51-80 (TVEGVAYTPRKDLLQIKGISDAKVDKIVEA) is the HhH domain. The 215-residue stretch at 100 to 314 (QEIIQITSGS…LRKGRAEERI (215 aa)) folds into the FtsK domain. Residue 130–137 (GEFRSGKT) participates in ATP binding.

This sequence belongs to the RecA family. RAD51 subfamily. As to quaternary structure, self-associates and interacts with XRCC3. Binds to RAD54/CHR25. Interacts with BRCA2A and BRCA2B. Can form a tripartite complex with both BRCA2B and DSS1(I). As to expression, detected in various tissues. Higher expression in reproductive tissues than in vegetative tissues, with the highest expression level in young flower buds. At cellular level, is expressed at low levels in flower primordia, then at higher levels in young anthers and at highest levels in both females and males meiocytes. Not detected in gametophytes.

It is found in the nucleus. Functionally, binds to single and double-stranded DNA and exhibits DNA-dependent ATPase activity. Unwinds duplex DNA. Component of the meiotic recombination pathway. Seems to play a role in mediating chromosome homology search, chromosome pairing and synapsis at early stages and probably chromosome crossing-over at later stages in meiosis. Probably is involved in the repair of meiotic double strand breaks (DBSs) generated by AtSPO11-1 and in homologous recombination. Its function is dispensable for vegetative growth and root mitosis. The polypeptide is DNA repair protein RAD51 homolog 1 (Arabidopsis thaliana (Mouse-ear cress)).